The sequence spans 226 residues: Large ribosomal subunit protein uL3 (226 aa).

This sequence belongs to the universal ribosomal protein uL3 family. Part of the 50S ribosomal subunit. Forms a cluster with proteins L14 and L19.

Its function is as follows. One of the primary rRNA binding proteins, it binds directly near the 3'-end of the 23S rRNA, where it nucleates assembly of the 50S subunit. The protein is Large ribosomal subunit protein uL3 of Sulfurihydrogenibium sp. (strain YO3AOP1).